The primary structure comprises 938 residues: MKIPNIGNVMNKFEILGVVGEGAYGVVLKCRHKETHEIVAIKKFKDSEENEEVKETTLRELKMLRTLKQENIVELKEAFRRRGKLYLVFEYVEKNMLELLEEMPNGVPPEKVKSYIYQLIKAIHWCHKNDIVHRDIKPENLLISHNDVLKLCDFGFARNLSEGNNANYTEYVATRWYRSPELLLGAPYGKSVDMWSVGCILGELSDGQPLFPGESEIDQLFTIQKVLGPLPSEQMKLFYSNPRFHGLRFPAVNHPQSLERRYLGILNSVLLDLMKNLLKLDPADRYLTEQCLNHPTFQTQRLLDRSPSRSTKRKPYHVESSTLSNRNQSTKGAALQTHHRSNSKDIQNLSVGLPRAEEGLPANESFLNGNLAGATLSPMHTKTYQASTQPGSSSKDLTNNNIPHLLSPKEAKSKTEFDFNIDTKPSEGPGTKYLKSSTRSQQNRHSFMESSQSKAGTLQPSEKQSRHSYIDTIPQSSRSPSYRTKAKSHGALSDSKSVSNLSEARAQITETNTSRYFPSSCLDLNSPTSPTPTRHTDTRTLLSPSGRNNRNEGTLDSRRTTTRHSKTMEELKLPEHMDSSHSHSLSAPHESFSYGLGYTSPFSSQQRPHRHSMYVTRDKVRAKGLDGSLSIGQGMAARANSLQLLSPQPGEQLPPEMTVARPSVKESSREGASSFHTRQKSEGGVYHDPHSDDGTAPKENRHLYNDPVPRRVGSFYRVPSPRPDNSFHENNVSTRVSSLPSDSSSGTNHSKRQPGFDPWKSPENISHADQLKEKEKQGFFRSMKKKKKKTQTVPNTDGPDLLTLQKAIHSSSTASSRPKEWRPEKLSDLQTQSQPLKSLRKLLHLSSSTNHPASSDPRFQPLTAQQAKNSFSEIRIHPLSQATGGSSNIRQEPTPKGRPALQLPGSSLLRYNGWKHSRSRSSQPDEVIFLASHEKWKQ.

A Protein kinase domain is found at 13-297 (FEILGVVGEG…TEQCLNHPTF (285 aa)). ATP contacts are provided by residues 19–27 (VGEGAYGVV) and Lys-42. The active-site Proton acceptor is the Asp-135. Disordered regions lie at residues 298–348 (QTQR…DIQN), 382–566 (KTYQ…RHSK), 646–865 (SPQP…LTAQ), and 877–938 (HPLS…KWKQ). 2 stretches are compositionally biased toward polar residues: residues 319–331 (ESST…QSTK) and 382–402 (KTYQ…NNNI). Ser-407 is modified (phosphoserine). Over residues 407–417 (SPKEAKSKTEF) the composition is skewed to basic and acidic residues. Polar residues-rich tracts occupy residues 434–462 (LKSS…QPSE), 473–482 (IPQSSRSPSY), and 494–548 (DSKS…SGRN). Ser-479 carries the post-translational modification Phosphoserine. 2 stretches are compositionally biased toward basic and acidic residues: residues 549 to 559 (NRNEGTLDSRR) and 679 to 704 (QKSE…RHLY). Ser-720 carries the phosphoserine modification. Positions 728–748 (HENNVSTRVSSLPSDSSSGTN) are enriched in polar residues. A Phosphoserine modification is found at Ser-761. Basic and acidic residues-rich tracts occupy residues 769-778 (DQLKEKEKQG) and 817-827 (RPKEWRPEKLS). A compositionally biased stretch (polar residues) spans 880–891 (SQATGGSSNIRQ).

This sequence belongs to the protein kinase superfamily. CMGC Ser/Thr protein kinase family. CDC2/CDKX subfamily. Interacts with MECP2. In terms of processing, autophosphorylated.

Its subcellular location is the nucleus. It localises to the cytoplasm. The protein localises to the cytoskeleton. The protein resides in the cilium basal body. It is found in the microtubule organizing center. Its subcellular location is the centrosome. The catalysed reaction is L-seryl-[protein] + ATP = O-phospho-L-seryl-[protein] + ADP + H(+). It carries out the reaction L-threonyl-[protein] + ATP = O-phospho-L-threonyl-[protein] + ADP + H(+). Functionally, mediates phosphorylation of MECP2. May regulate ciliogenesis. In Mus musculus (Mouse), this protein is Cyclin-dependent kinase-like 5.